A 241-amino-acid polypeptide reads, in one-letter code: Platelet-derived growth factor subunit B (241 aa).

The N-terminal stretch at 1 to 20 is a signal peptide; that stretch reads MNRCWALFLSLCCYLRLVSA. Residues 21–81 constitute a propeptide, removed in mature form; it reads EGDPIPEELY…ELESLSRGRR (61 aa). N63 carries an N-linked (GlcNAc...) asparagine glycan. 3 disulfide bridges follow: C97/C141, C130/C178, and C134/C180. The propeptide at 191–241 is removed in mature form; the sequence is TPGSSQEQRAARTPQTRVTIRTVRVRRPPKGKHRKFKHTHDKTALKETLGA. The segment covering 217 to 230 has biased composition (basic residues); the sequence is RPPKGKHRKFKHTH. Residues 217–241 form a disordered region; the sequence is RPPKGKHRKFKHTHDKTALKETLGA.

This sequence belongs to the PDGF/VEGF growth factor family. As to quaternary structure, antiparallel homodimer; disulfide-linked. Antiparallel heterodimer with PDGFA; disulfide-linked. The PDGFB homodimer interacts with PDGFRA and PDGFRB homodimers, and with heterodimers formed by PDGFRA and PDGFRB. The heterodimer composed of PDGFA and PDGFB interacts with PDGFRB homodimers, and with heterodimers formed by PDGFRA and PDGFRB. Interacts with XLKD1. Interacts with LRP1. Interacts with SORL1 (via the N-terminal ectodomain). Interacts with CD82; this interaction inhibits PDGFB-mediated signaling pathway.

The protein localises to the secreted. In terms of biological role, growth factor that plays an essential role in the regulation of embryonic development, cell proliferation, cell migration, survival and chemotaxis. Potent mitogen for cells of mesenchymal origin. Required for normal proliferation and recruitment of pericytes and vascular smooth muscle cells in the central nervous system, skin, lung, heart and placenta. Required for normal blood vessel development, and for normal development of kidney glomeruli. Plays an important role in wound healing. Signaling is modulated by the formation of heterodimers with PDGFA. The sequence is that of Platelet-derived growth factor subunit B (PDGFB) from Ovis aries (Sheep).